The chain runs to 228 residues: Ribosomal RNA small subunit methyltransferase G (228 aa).

Residues G70, 121-122 (AE), and R138 each bind S-adenosyl-L-methionine.

This sequence belongs to the methyltransferase superfamily. RNA methyltransferase RsmG family.

It localises to the cytoplasm. Its function is as follows. Specifically methylates the N7 position of a guanine in 16S rRNA. The sequence is that of Ribosomal RNA small subunit methyltransferase G from Thermotoga sp. (strain RQ2).